A 531-amino-acid polypeptide reads, in one-letter code: Chaperonin GroEL 2 (531 aa).

Residues 30 to 33, 87 to 91, G414, and D494 contribute to the ATP site; these read TLGP and DGTTT.

The protein belongs to the chaperonin (HSP60) family. Forms a cylinder of 14 subunits composed of two heptameric rings stacked back-to-back. Interacts with the co-chaperonin GroES.

The protein localises to the cytoplasm. The enzyme catalyses ATP + H2O + a folded polypeptide = ADP + phosphate + an unfolded polypeptide.. In terms of biological role, together with its co-chaperonin GroES, plays an essential role in assisting protein folding. The GroEL-GroES system forms a nano-cage that allows encapsulation of the non-native substrate proteins and provides a physical environment optimized to promote and accelerate protein folding. This chain is Chaperonin GroEL 2, found in Cutibacterium acnes (strain DSM 16379 / KPA171202) (Propionibacterium acnes).